The following is a 483-amino-acid chain: MANKDQNLTLWYDQLLSKAQLVSYGDVKGTNCFLPNSWNLWLQIQRLYNNATALIKLKDKVILKQFIPIEPLPYTVEQVQLPTLSFYSEYQKEKRHVEGFNPELFLIEQIGTKKLHDPLVLRPTSEIAFCNLWKKQSFSYQNLPVIYNQWTCVFRAEKNTRPFLRNSEFYWQETHGLFSDGVNSESAAIAFWKLYQDIIVNQLCIPAFVGLKSPNERFAGAQNTWTVESIMPDGQALQCATSHDLGQTFTKPFGLTFQNQANQQAIPYSFSCGISTRILGALLLTHSDDFGLVLPWKVAPIQVKLYLFDKKGDTKTVELAQKVQTLLEQLAIRFQFIKVENQLGKQLGQGEVNGIPFQLIVDNPQTVNIFNRLTRVKTAYSFEQLASRFVELVQQYHQAMYDKAKAVVQQKVVQATTLKQIEQAFNDKKAVLCAVRLTDTLEQQLKERYQVTVRCCLEQLQKPQICPFSGESAQDYVLIARAY.

Belongs to the class-II aminoacyl-tRNA synthetase family. ProS type 3 subfamily. As to quaternary structure, homodimer.

The protein localises to the cytoplasm. It carries out the reaction tRNA(Pro) + L-proline + ATP = L-prolyl-tRNA(Pro) + AMP + diphosphate. In terms of biological role, catalyzes the attachment of proline to tRNA(Pro) in a two-step reaction: proline is first activated by ATP to form Pro-AMP and then transferred to the acceptor end of tRNA(Pro). The protein is Proline--tRNA ligase of Mycoplasma pneumoniae (strain ATCC 29342 / M129 / Subtype 1) (Mycoplasmoides pneumoniae).